We begin with the raw amino-acid sequence, 216 residues long: Sugar transporter SWEET1 (216 aa).

Helical transmembrane passes span Trp-3–Leu-23, Glu-36–Tyr-56, Leu-65–Leu-85, Gln-96–Leu-116, Leu-125–Ala-145, Ser-157–Val-177, and Leu-181–Phe-201. Residues Leu-6 to Arg-90 enclose the MtN3/slv 1 domain. In terms of domain architecture, MtN3/slv 2 spans Gln-124–Pro-206.

It belongs to the SWEET sugar transporter family.

The protein localises to the golgi apparatus membrane. It localises to the cell membrane. Functionally, mediates sugar transport across membranes. This is Sugar transporter SWEET1 (slc50a1) from Xenopus laevis (African clawed frog).